Reading from the N-terminus, the 279-residue chain is tRNA-cytidine(32) 2-sulfurtransferase (279 aa).

Positions 46–51 (SGGKDS) match the PP-loop motif motif. [4Fe-4S] cluster contacts are provided by Cys121, Cys124, and Cys212.

It belongs to the TtcA family. As to quaternary structure, homodimer. Requires Mg(2+) as cofactor. It depends on [4Fe-4S] cluster as a cofactor.

The protein resides in the cytoplasm. It carries out the reaction cytidine(32) in tRNA + S-sulfanyl-L-cysteinyl-[cysteine desulfurase] + AH2 + ATP = 2-thiocytidine(32) in tRNA + L-cysteinyl-[cysteine desulfurase] + A + AMP + diphosphate + H(+). It functions in the pathway tRNA modification. In terms of biological role, catalyzes the ATP-dependent 2-thiolation of cytidine in position 32 of tRNA, to form 2-thiocytidine (s(2)C32). The sulfur atoms are provided by the cysteine/cysteine desulfurase (IscS) system. The chain is tRNA-cytidine(32) 2-sulfurtransferase from Marinomonas sp. (strain MWYL1).